The sequence spans 533 residues: Early growth response protein 1 (533 aa).

Disordered stretches follow at residues 1 to 94 (MAAA…EQPY) and 161 to 237 (MTNP…PPPA). Residues 68–77 (SGGGGGGGSN) are compositionally biased toward gly residues. Low complexity predominate over residues 164–189 (PPTSSSSAPSPAASSSSSASQSPPLS). Lys-303 participates in a covalent cross-link: Glycyl lysine isopeptide (Lys-Gly) (interchain with G-Cter in SUMO2). The interval 316–336 (PSRMRKYPNRPSKTPPHERPY) is disordered. 3 consecutive C2H2-type zinc fingers follow at residues 336–360 (YACP…IRIH), 366–388 (FQCR…IRTH), and 394–416 (FACD…TKIH). A disordered region spans residues 407–478 (DERKRHTKIH…SSTYPSPAHS (72 aa)). Positions 411-421 (RHTKIHLRQKD) are enriched in basic residues. A compositionally biased stretch (low complexity) spans 427–475 (SVVASPAASSLSSYPSPVATSYPSPATTSFPSPVPTSYSSPGSSTYPSP).

This sequence belongs to the EGR C2H2-type zinc-finger protein family. In terms of assembly, interacts with SNAI1 and SP1 upon 12-O-tetradecanoylphorbol-13-acetate (TPA) induction. As to expression, detected in lung vasculature and in mononuclear phagocytes. Detected in liver (at protein level). Expressed in the liver in a circadian manner.

It is found in the nucleus. It localises to the cytoplasm. In terms of biological role, transcriptional regulator. Recognizes and binds to the DNA sequence 5'-GCG(T/G)GGGCG-3'(EGR-site) in the promoter region of target genes. Binds double-stranded target DNA, irrespective of the cytosine methylation status. Regulates the transcription of numerous target genes, and thereby plays an important role in regulating the response to growth factors, DNA damage, and ischemia. Plays a role in the regulation of cell survival, proliferation and cell death. Activates expression of p53/TP53 and TGFB1, and thereby helps prevent tumor formation. Required for normal progress through mitosis and normal proliferation of hepatocytes after partial hepatectomy. Mediates responses to ischemia and hypoxia; regulates the expression of proteins such as IL1B and CXCL2 that are involved in inflammatory processes and development of tissue damage after ischemia. Regulates biosynthesis of luteinizing hormone (LHB) in the pituitary. Regulates the amplitude of the expression rhythms of clock genes: BMAL1, PER2 and NR1D1 in the liver via the activation of PER1 (clock repressor) transcription. Regulates the rhythmic expression of core-clock gene BMAL1 in the suprachiasmatic nucleus (SCN). This is Early growth response protein 1 (Egr1) from Mus musculus (Mouse).